Consider the following 72-residue polypeptide: Translation initiation factor IF-1 (72 aa).

Positions 1 to 72 constitute an S1-like domain; it reads MAKEELLEFP…TKGRITYRFK (72 aa).

Belongs to the IF-1 family. Component of the 30S ribosomal translation pre-initiation complex which assembles on the 30S ribosome in the order IF-2 and IF-3, IF-1 and N-formylmethionyl-tRNA(fMet); mRNA recruitment can occur at any time during PIC assembly.

Its subcellular location is the cytoplasm. One of the essential components for the initiation of protein synthesis. Stabilizes the binding of IF-2 and IF-3 on the 30S subunit to which N-formylmethionyl-tRNA(fMet) subsequently binds. Helps modulate mRNA selection, yielding the 30S pre-initiation complex (PIC). Upon addition of the 50S ribosomal subunit IF-1, IF-2 and IF-3 are released leaving the mature 70S translation initiation complex. In Maricaulis maris (strain MCS10) (Caulobacter maris), this protein is Translation initiation factor IF-1.